Consider the following 326-residue polypeptide: Bifunctional pinoresinol-lariciresinol reductase (326 aa).

NADP(+)-binding positions include 25-31, R50, and K59; that span reads GGTGYLG. K153 serves as the catalytic Proton acceptor. Position 157 (R157) interacts with NADP(+). H285 serves as a coordination point for substrate.

This sequence belongs to the NmrA-type oxidoreductase family. Isoflavone reductase subfamily. In terms of assembly, dimer.

It catalyses the reaction (+)-lariciresinol + NADP(+) = (+)-pinoresinol + NADPH + H(+). The catalysed reaction is (-)-secoisolariciresinol + NADP(+) = (+)-lariciresinol + NADPH + H(+). Reductase involved in lignan biosynthesis. Catalyzes the enantioselective conversion of (+)-pinoresinol into (+)-lariciresinol and of (+)-lariciresinol into (-)-secoisolariciresinol. Abstracts the 4R-hydride from the NADPH cofactor during catalysis. The protein is Bifunctional pinoresinol-lariciresinol reductase (PLR1) of Linum album (Flax).